The chain runs to 663 residues: UvrABC system protein B (663 aa).

Positions 26 to 414 (DGLESGLAKQ…DNVAEQVVRP (389 aa)) constitute a Helicase ATP-binding domain. An ATP-binding site is contributed by 39–46 (GVTGSGKT). A Beta-hairpin motif is present at residues 92-115 (YYDYYQPEAYVPASDTFIEKDASI). The region spanning 430–596 (QVDDLMSEIR…GINKSVEDIL (167 aa)) is the Helicase C-terminal domain. The 36-residue stretch at 624–659 (VKQINALEKQMYSHAQNMEFELAAKIRDEYLLLKEQ) folds into the UVR domain.

It belongs to the UvrB family. In terms of assembly, forms a heterotetramer with UvrA during the search for lesions. Interacts with UvrC in an incision complex.

The protein resides in the cytoplasm. Functionally, the UvrABC repair system catalyzes the recognition and processing of DNA lesions. A damage recognition complex composed of 2 UvrA and 2 UvrB subunits scans DNA for abnormalities. Upon binding of the UvrA(2)B(2) complex to a putative damaged site, the DNA wraps around one UvrB monomer. DNA wrap is dependent on ATP binding by UvrB and probably causes local melting of the DNA helix, facilitating insertion of UvrB beta-hairpin between the DNA strands. Then UvrB probes one DNA strand for the presence of a lesion. If a lesion is found the UvrA subunits dissociate and the UvrB-DNA preincision complex is formed. This complex is subsequently bound by UvrC and the second UvrB is released. If no lesion is found, the DNA wraps around the other UvrB subunit that will check the other stand for damage. The protein is UvrABC system protein B of Legionella pneumophila subsp. pneumophila (strain Philadelphia 1 / ATCC 33152 / DSM 7513).